Consider the following 317-residue polypeptide: Glutamyl-tRNA reductase-binding protein, chloroplastic (317 aa).

Residues 1 to 42 (MQLQTQSFALNLLPSPNFAKPIERREFISLKRDPSRPISLRC) constitute a chloroplast transit peptide.

Interacts with HEMA1 and forms a heterotetramer of two GLUTRBP and two HEMA1 subunits.

The protein localises to the plastid. It localises to the chloroplast stroma. Involved in the regulation of glutamyl-tRNA reductase (GluTR) which is important for the synthesis and distribution of 5-aminolevulinate, a precursor in heme and chlorophyll biosynthesis. Stimulates GluTR activity and regulates glutamate-1-semialdehyde release. May play a role in heme metabolism. Necessary for efficient photosynthetic electron transport in chloroplasts. The polypeptide is Glutamyl-tRNA reductase-binding protein, chloroplastic (Arabidopsis thaliana (Mouse-ear cress)).